Consider the following 142-residue polypeptide: Large-conductance mechanosensitive channel (142 aa).

3 helical membrane passes run 15–35 (AFVM…GAAF), 38–58 (IVTS…IGNI), and 82–102 (GMFI…FVAI).

The protein belongs to the MscL family. In terms of assembly, homopentamer.

It localises to the cell inner membrane. Functionally, channel that opens in response to stretch forces in the membrane lipid bilayer. May participate in the regulation of osmotic pressure changes within the cell. The polypeptide is Large-conductance mechanosensitive channel (Fusobacterium nucleatum subsp. nucleatum (strain ATCC 25586 / DSM 15643 / BCRC 10681 / CIP 101130 / JCM 8532 / KCTC 2640 / LMG 13131 / VPI 4355)).